The primary structure comprises 1311 residues: Clustered mitochondria protein homolog (1311 aa).

The segment covering Met-1–Pro-18 has biased composition (low complexity). Positions Met-1 to Asp-27 are disordered. The 245-residue stretch at Asp-324–Gln-568 folds into the Clu domain. The stretch at Ile-491–Ala-525 is one TPR 1 repeat. The segment covering Ser-606–Glu-630 has biased composition (basic and acidic residues). Disordered stretches follow at residues Ser-606–Arg-694 and Pro-925–Ile-966. Residues Ser-631–Glu-661 show a composition bias toward acidic residues. Residues Pro-665–Ala-675 show a composition bias toward basic residues. The span at Lys-676 to Arg-694 shows a compositional bias: basic and acidic residues. 3 TPR repeats span residues Ala-1034–Thr-1067, Leu-1076–Ile-1109, and Ile-1118–Val-1151. Residues Leu-1276–Lys-1286 are compositionally biased toward basic and acidic residues. Positions Leu-1276–Ala-1311 are disordered. Positions Lys-1287–Arg-1301 are enriched in basic residues.

It belongs to the CLU family. In terms of assembly, may associate with the eukaryotic translation initiation factor 3 (eIF-3) complex.

It is found in the cytoplasm. Its function is as follows. mRNA-binding protein involved in proper cytoplasmic distribution of mitochondria. In Pyricularia oryzae (strain 70-15 / ATCC MYA-4617 / FGSC 8958) (Rice blast fungus), this protein is Clustered mitochondria protein homolog.